A 334-amino-acid chain; its full sequence is Ribosomal RNA small subunit methyltransferase H (334 aa).

Residues 1–21 form a disordered region; that stretch reads MNALPIRTAAPSGHSGGHSST. Residues 52 to 54, aspartate 71, phenylalanine 98, aspartate 119, and glutamine 126 contribute to the S-adenosyl-L-methionine site; that span reads GGY.

The protein belongs to the methyltransferase superfamily. RsmH family.

It localises to the cytoplasm. It carries out the reaction cytidine(1402) in 16S rRNA + S-adenosyl-L-methionine = N(4)-methylcytidine(1402) in 16S rRNA + S-adenosyl-L-homocysteine + H(+). Its function is as follows. Specifically methylates the N4 position of cytidine in position 1402 (C1402) of 16S rRNA. The polypeptide is Ribosomal RNA small subunit methyltransferase H (Granulibacter bethesdensis (strain ATCC BAA-1260 / CGDNIH1)).